Consider the following 247-residue polypeptide: Pleckstrin homology domain-containing family F member 2 (247 aa).

The PH domain maps to 35-131; the sequence is VLIGEGVLTK…WMSHINKCVS (97 aa). The FYVE-type zinc-finger motif lies at 152 to 212; it reads DSEATVCMRC…VCEFCYKQLS (61 aa). The Zn(2+) site is built by cysteine 158, cysteine 161, cysteine 175, cysteine 178, cysteine 183, cysteine 186, cysteine 204, and cysteine 207. A disordered region spans residues 213-247; that stretch reads TGATLPPRSDSYSRQGSDFGSNNISDDDDDDDSSD. The segment covering 222-236 has biased composition (polar residues); the sequence is DSYSRQGSDFGSNNI. Residues 237–247 show a composition bias toward acidic residues; sequence SDDDDDDDSSD.

Its subcellular location is the early endosome membrane. It is found in the endoplasmic reticulum. Functionally, may play a role in early endosome fusion upstream of RAB5, hence regulating receptor trafficking and fluid-phase transport. Enhances cellular sensitivity to TNF-induced apoptosis. The chain is Pleckstrin homology domain-containing family F member 2 (plekhf2) from Danio rerio (Zebrafish).